The sequence spans 358 residues: Putative hydrogenase expression/formation protein MJ0993 (358 aa).

3 residues coordinate Fe cation: Cys-33, Cys-61, and Cys-64.

It belongs to the HypD family.

This chain is Putative hydrogenase expression/formation protein MJ0993, found in Methanocaldococcus jannaschii (strain ATCC 43067 / DSM 2661 / JAL-1 / JCM 10045 / NBRC 100440) (Methanococcus jannaschii).